The sequence spans 149 residues: Transcriptional regulator MraZ (149 aa).

2 consecutive SpoVT-AbrB domains span residues 6-52 (RSYR…TPED) and 81-124 (VEEL…SEEE).

Belongs to the MraZ family. As to quaternary structure, forms oligomers.

The protein localises to the cytoplasm. The protein resides in the nucleoid. The sequence is that of Transcriptional regulator MraZ from Oleidesulfovibrio alaskensis (strain ATCC BAA-1058 / DSM 17464 / G20) (Desulfovibrio alaskensis).